Consider the following 695-residue polypeptide: MDLHSLLELGTKPTAPHVRNKKVILFDTNHQVSICNQIIDAINSGIDLGDLLEGGLLTLCVEHYYNSDKDKFNTSPIAKYLRDAGYEFDVIKNPDATRFLEVIPNEPHYSPLILALKTLESTESQRGRIGLFLSFCSLFLPKLVVGDRASIEKALRQVTVHQEQGIVTYPNHWLTTGHMKVIFGILRSSFILKFVLIHQGVNLVTGHDAYDSIISNSVGQTRFSGLLIVKTVLEFILQKTDSGVALHPLVRTSKVKNEVASFKQALSNLARHGEYAPFARVLNLSGINNLEHGLYPQLSAIALGVATAHGSTLAGVNVGEQYQQLREAAHDAEVKLQRRHEHQEIQAIAEDDEERKILEQFHLQKTEITHSQTLAVLSQKREKLARLAAEIENNIAEDQGFKQSQNQVSQSFLNDPTPVEVTVQARSINRPTALPPPVDNKIEHETEEDSSSSSSFVDLNDPFALLNEDEDTLENSVMAPSTTLREPKEVSEPLRQTQDLDISQKKQGNESTDPARKQFLRYQELPPVQEDDESEYTTDSQESDDQPGSDNEQGVDLPPPPLYAQEKRQDPIQHPAVSSQDPFGSIGDVDGDILEPIRSPSSPSAPQEDTRMGEAYELSPDFTSYEDNQQNWPQRVVTKKGRTFLYPNDLLQTSPPESLITALVEEYQNPVSAKELQADWPDMSFDERRHVAMNL.

Coiled-coil stretches lie at residues 316–341 and 372–400; these read VNVGEQYQQLREAAHDAEVKLQRRHE and QTLAVLSQKREKLARLAAEIENNIAEDQG. Disordered regions lie at residues 426-458 and 472-611; these read RSINRPTALPPPVDNKIEHETEEDSSSSSSFVD and TLEN…EDTR. Polar residues predominate over residues 474-484; it reads ENSVMAPSTTL. Positions 502 to 516 are enriched in basic and acidic residues; sequence ISQKKQGNESTDPAR. Residues 529-547 show a composition bias toward acidic residues; it reads QEDDESEYTTDSQESDDQP. The PTAP/PSAP motif signature appears at 603–606; sequence PSAP.

This sequence belongs to the filoviruses nucleoprotein family. In terms of assembly, homooligomer. Homomultimerizes to form the nucleocapsid. Binds to viral genomic RNA. Interacts with VP35 and VP30 to form the nucleocapsid. Also interacts with VP24 and VP40. Phosphorylated.

It localises to the virion. The protein localises to the host cytoplasm. Its function is as follows. Encapsidates the genome, protecting it from nucleases. The encapsidated genomic RNA is termed the nucleocapsid and serves as template for transcription and replication. During replication, encapsidation by NP is coupled to RNA synthesis and all replicative products are resistant to nucleases. The polypeptide is Nucleoprotein (NP) (Lake Victoria marburgvirus (strain Ravn-87) (MARV)).